The chain runs to 141 residues: Hemoglobin subunit alpha (141 aa).

A Globin domain is found at 1–141; it reads VLSGEDKNNI…VSTVLTSKYR (141 aa). The residue at position 3 (Ser-3) is a Phosphoserine. Lys-7 and Lys-11 each carry N6-succinyllysine. The residue at position 16 (Lys-16) is an N6-acetyllysine; alternate. Lys-16 is subject to N6-succinyllysine; alternate. The residue at position 24 (Tyr-24) is a Phosphotyrosine. Lys-40 bears the N6-succinyllysine mark. Ser-49 carries the post-translational modification Phosphoserine. Position 58 (His-58) interacts with O2. His-87 serves as a coordination point for heme b. Ser-102 bears the Phosphoserine mark. Thr-108 carries the post-translational modification Phosphothreonine. Phosphoserine occurs at positions 124 and 131. Residues Thr-134 and Thr-137 each carry the phosphothreonine modification. Ser-138 is modified (phosphoserine).

Belongs to the globin family. Heterotetramer of two alpha chains and two beta chains. Red blood cells.

Its function is as follows. Involved in oxygen transport from the lung to the various peripheral tissues. Functionally, hemopressin acts as an antagonist peptide of the cannabinoid receptor CNR1. Hemopressin-binding efficiently blocks cannabinoid receptor CNR1 and subsequent signaling. This chain is Hemoglobin subunit alpha (HBA), found in Ondatra zibethicus (Muskrat).